The primary structure comprises 324 residues: N-acetyl-gamma-glutamyl-phosphate reductase (324 aa).

The active site involves Cys131.

The protein belongs to the NAGSA dehydrogenase family. Type 1 subfamily.

It is found in the cytoplasm. The enzyme catalyses N-acetyl-L-glutamate 5-semialdehyde + phosphate + NADP(+) = N-acetyl-L-glutamyl 5-phosphate + NADPH + H(+). The protein operates within amino-acid biosynthesis; L-arginine biosynthesis; N(2)-acetyl-L-ornithine from L-glutamate: step 3/4. Its function is as follows. Catalyzes the NADPH-dependent reduction of N-acetyl-5-glutamyl phosphate to yield N-acetyl-L-glutamate 5-semialdehyde. The sequence is that of N-acetyl-gamma-glutamyl-phosphate reductase from Bradyrhizobium sp. (strain BTAi1 / ATCC BAA-1182).